A 279-amino-acid polypeptide reads, in one-letter code: 3-methyl-2-oxobutanoate hydroxymethyltransferase (279 aa).

Residues aspartate 43 and aspartate 82 each contribute to the Mg(2+) site. 3-methyl-2-oxobutanoate is bound by residues 43-44, aspartate 82, and lysine 112; that span reads DS. Residue glutamate 114 coordinates Mg(2+). Catalysis depends on glutamate 181, which acts as the Proton acceptor.

Belongs to the PanB family. In terms of assembly, homodecamer; pentamer of dimers. It depends on Mg(2+) as a cofactor.

The protein localises to the cytoplasm. The catalysed reaction is 3-methyl-2-oxobutanoate + (6R)-5,10-methylene-5,6,7,8-tetrahydrofolate + H2O = 2-dehydropantoate + (6S)-5,6,7,8-tetrahydrofolate. Its pathway is cofactor biosynthesis; (R)-pantothenate biosynthesis; (R)-pantoate from 3-methyl-2-oxobutanoate: step 1/2. Catalyzes the reversible reaction in which hydroxymethyl group from 5,10-methylenetetrahydrofolate is transferred onto alpha-ketoisovalerate to form ketopantoate. The sequence is that of 3-methyl-2-oxobutanoate hydroxymethyltransferase from Shouchella clausii (strain KSM-K16) (Alkalihalobacillus clausii).